The sequence spans 376 residues: MSTAGKVIKCKAAVLWEPHKPFTIEDIEVAPPKAHEVRIKMVATGVCRSDDHAVSGSLFTPLPAVLGHEGAGIVESIGEGVTCVKPGDKVIPLFSPQCGKCRICKHPESNLCCQTKNLTQPKGALLDGTSRFSCRGKPIHHFISTSTFSQYTVVDDIAVAKIDAAAPLDKVCLIGCGFSTGYGSAVQVAKVTPGSTCAVFGLGGVGLSVVIGCKTAGAAKIIAVDINKDKFAKAKELGATDCINPQDYTKPIQEVLQEMTDGGVDFSFEVIGRLDTMTSALLSCHSACGVSVIVGVPPSAQSLSVNPMSLLLGRTWKGAIFGGFKSKDAVPKLVADFMAKKFPLEPLITHVLPFEKINEAFDLLRAGKSIRTVLTF.

Ser-2 carries the post-translational modification N-acetylserine. Residues Cys-47, His-68, Cys-98, Cys-101, Cys-104, Cys-112, and Cys-176 each coordinate Zn(2+). Residues 201–206 (GLGGVG), Asp-225, and Lys-230 each bind NAD(+). Position 235 is an N6-succinyllysine (Lys-235). NAD(+) is bound at residue 294–296 (VGV). Residue Lys-341 is modified to N6-succinyllysine. Position 371 (Arg-371) interacts with NAD(+).

Belongs to the zinc-containing alcohol dehydrogenase family. Class-I subfamily. As to quaternary structure, dimer of identical or non-identical chains of three types (A, B, C), which are coded by 3 separate genes at different loci. Zn(2+) is required as a cofactor.

It localises to the cytoplasm. The enzyme catalyses a primary alcohol + NAD(+) = an aldehyde + NADH + H(+). The catalysed reaction is a secondary alcohol + NAD(+) = a ketone + NADH + H(+). This Rattus norvegicus (Rat) protein is Alcohol dehydrogenase 1 (Adh1).